The following is a 169-amino-acid chain: uncharacterized protein (169 aa).

Residues 55 to 77 form a helical membrane-spanning segment; sequence SLFIFKAVMILHTCLIVKSIRIF.

Its subcellular location is the membrane. This is an uncharacterized protein from Saccharomyces cerevisiae (strain ATCC 204508 / S288c) (Baker's yeast).